We begin with the raw amino-acid sequence, 187 residues long: Interferon alpha-3 (187 aa).

The first 23 residues, 1-23 (MALPCSFSVALVLLSCHSLCCLA), serve as a signal peptide directing secretion. Intrachain disulfides connect C24–C122 and C52–C160. 2 N-linked (GlcNAc...) asparagine glycosylation sites follow: N94 and N101.

It belongs to the alpha/beta interferon family.

It is found in the secreted. Its function is as follows. Produced by macrophages, IFN-alpha have antiviral activities. Interferon stimulates the production of two enzymes: a protein kinase and an oligoadenylate synthetase. This Canis lupus familiaris (Dog) protein is Interferon alpha-3.